Here is a 351-residue protein sequence, read N- to C-terminus: Type II restriction enzyme NmeDI (351 aa).

It catalyses the reaction Endonucleolytic cleavage of DNA to give specific double-stranded fragments with terminal 5'-phosphates.. Functionally, a P subtype restriction enzyme that recognizes the double-stranded sequence 5'-N(12)RCCGGYN(12)-3' and cleaves on both sides of the recognition sequence. The protein is Type II restriction enzyme NmeDI (nmeDIRP) of Neisseria meningitidis serogroup C.